A 479-amino-acid chain; its full sequence is Isoprimeverose transporter (479 aa).

The next 11 helical transmembrane spans lie at 54–74, 102–122, 131–151, 174–194, 205–225, 253–273, 289–309, 321–341, 348–368, 397–417, and 431–451; these read MFFYTDVFGISAAIVGTLFLV, PYWLWFAIPFAVFSVLCFTVP, VWAYVTYIGVDVLYSAVNIPI, FMGTLGATIISTIALPLVAYF, WFMVALIMAVIAMVIFFIVFA, WPWVIVIFINFIYWLGMQTRS, LASFILGLQLVALLAVVITPW, LMGMLLAIVGQLILWGGSKAL, VGTIVGYLGTGFVSGLIAVML, FGMGIGGAVTGLILSAGGYVA, and MNYVWVPIVGFGLSAIALLFY.

Belongs to the sodium:galactoside symporter (TC 2.A.2) family.

It localises to the cell membrane. Its function is as follows. Involved in the metabolism of isoprimeverose. Transports isoprimeverose into the cell. Transport is driven by the proton motive force generated by malolactic fermentation. Cannot transport D-xylose. The sequence is that of Isoprimeverose transporter from Lactiplantibacillus pentosus (Lactobacillus pentosus).